The chain runs to 679 residues: Methionine--tRNA ligase (679 aa).

The short motif at Pro14–His24 is the 'HIGH' region element. 4 residues coordinate Zn(2+): Cys145, Cys148, Cys158, and Cys161. The short motif at Lys331–Ser335 is the 'KMSKS' region element. Lys334 contributes to the ATP binding site. One can recognise a tRNA-binding domain in the interval Thr577–Lys679.

Belongs to the class-I aminoacyl-tRNA synthetase family. MetG type 1 subfamily. As to quaternary structure, homodimer. The cofactor is Zn(2+).

It is found in the cytoplasm. The catalysed reaction is tRNA(Met) + L-methionine + ATP = L-methionyl-tRNA(Met) + AMP + diphosphate. Functionally, is required not only for elongation of protein synthesis but also for the initiation of all mRNA translation through initiator tRNA(fMet) aminoacylation. This is Methionine--tRNA ligase from Pseudomonas putida (strain GB-1).